The sequence spans 219 residues: ATP-dependent Clp protease proteolytic subunit 3 (219 aa).

The Nucleophile role is filled by Ser-112. His-137 is an active-site residue.

It belongs to the peptidase S14 family. Fourteen ClpP subunits assemble into 2 heptameric rings which stack back to back to give a disk-like structure with a central cavity, resembling the structure of eukaryotic proteasomes.

The protein localises to the cytoplasm. The catalysed reaction is Hydrolysis of proteins to small peptides in the presence of ATP and magnesium. alpha-casein is the usual test substrate. In the absence of ATP, only oligopeptides shorter than five residues are hydrolyzed (such as succinyl-Leu-Tyr-|-NHMec, and Leu-Tyr-Leu-|-Tyr-Trp, in which cleavage of the -Tyr-|-Leu- and -Tyr-|-Trp bonds also occurs).. In terms of biological role, cleaves peptides in various proteins in a process that requires ATP hydrolysis. Has a chymotrypsin-like activity. Plays a major role in the degradation of misfolded proteins. This is ATP-dependent Clp protease proteolytic subunit 3 from Streptomyces avermitilis (strain ATCC 31267 / DSM 46492 / JCM 5070 / NBRC 14893 / NCIMB 12804 / NRRL 8165 / MA-4680).